A 332-amino-acid polypeptide reads, in one-letter code: tRNA-dihydrouridine synthase B (332 aa).

FMN-binding positions include 16–18 (PMA) and Gln-70. Cys-100 serves as the catalytic Proton donor. FMN contacts are provided by residues Lys-139, 200 to 202 (NGD), and 224 to 225 (GR).

This sequence belongs to the Dus family. DusB subfamily. Requires FMN as cofactor.

It carries out the reaction a 5,6-dihydrouridine in tRNA + NAD(+) = a uridine in tRNA + NADH + H(+). The catalysed reaction is a 5,6-dihydrouridine in tRNA + NADP(+) = a uridine in tRNA + NADPH + H(+). In terms of biological role, catalyzes the synthesis of 5,6-dihydrouridine (D), a modified base found in the D-loop of most tRNAs, via the reduction of the C5-C6 double bond in target uridines. The sequence is that of tRNA-dihydrouridine synthase B from Xanthomonas axonopodis pv. citri (strain 306).